The primary structure comprises 274 residues: 2,3,4,5-tetrahydropyridine-2,6-dicarboxylate N-succinyltransferase (274 aa).

Substrate-binding residues include Arg-104 and Asp-141.

It belongs to the transferase hexapeptide repeat family. As to quaternary structure, homotrimer.

The protein localises to the cytoplasm. The catalysed reaction is (S)-2,3,4,5-tetrahydrodipicolinate + succinyl-CoA + H2O = (S)-2-succinylamino-6-oxoheptanedioate + CoA. The protein operates within amino-acid biosynthesis; L-lysine biosynthesis via DAP pathway; LL-2,6-diaminopimelate from (S)-tetrahydrodipicolinate (succinylase route): step 1/3. The sequence is that of 2,3,4,5-tetrahydropyridine-2,6-dicarboxylate N-succinyltransferase from Yersinia pestis.